Consider the following 961-residue polypeptide: Ras-interacting protein 1 (961 aa).

Over residues 1-10 (MLSGERKEGG) the composition is skewed to basic and acidic residues. Disordered regions lie at residues 1-21 (MLSG…HLPV), 35-70 (LGRR…PHVE), and 96-116 (RGSG…QRWA). The segment covering 41–57 (SAASVKSSSSDTGSRSS) has biased composition (low complexity). Positions 59-68 (PLPPPPPPPH) are enriched in pro residues. Position 96 is an omega-N-methylarginine (Arg-96). Residues 98 to 110 (SGAGGAGGPGTPG) show a composition bias toward gly residues. Residues 141–253 (PPGVLKIFAS…RRFELRGREE (113 aa)) form the Ras-associating domain. Positions 261 to 352 (AFGAADADGT…MAPGAADAQM (92 aa)) are disordered. Phosphoserine is present on residues Ser-274 and Ser-286. Low complexity predominate over residues 284–295 (AASGGAALASPG). The span at 296–307 (PGSGSGTPTGSG) shows a compositional bias: gly residues. Positions 314–327 (NLSLRRSVSELSLQ) are enriched in low complexity. A phosphoserine mark is found at Ser-320, Ser-322, Ser-325, and Ser-413. In terms of domain architecture, Dilute spans 594 to 895 (GRLARLIKEA…PPAERDAVDT (302 aa)).

In terms of assembly, interacts with Ras family members that have been activated by GTP binding. Interacts with HRAS, RAP1A, RAP2, RRAS, RAF1 and RRAS2. Interacts with MYH9 and ARHGAP29. Detected in kidney, heart, skeletal muscle, small intestine and lung.

Its subcellular location is the cytoplasm. The protein localises to the perinuclear region. It is found in the golgi apparatus. It localises to the golgi stack. Functionally, required for the proper formation of vascular structures that develop via both vasculogenesis and angiogenesis. Acts as a critical and vascular-specific regulator of GTPase signaling, cell architecture, and adhesion, which is essential for endothelial cell morphogenesis and blood vessel tubulogenesis. Regulates the activity of Rho GTPases in part by recruiting ARHGAP29 and suppressing RhoA signaling and dampening ROCK and MYH9 activities in endothelial cells. May act as effector for Golgi-bound HRAS and other Ras-like proteins. May promote HRAS-mediated transformation. Negative regulator of amino acid starvation-induced autophagy. This is Ras-interacting protein 1 (Rasip1) from Mus musculus (Mouse).